The chain runs to 378 residues: UPF0754 membrane protein Exig_0680 (378 aa).

Helical transmembrane passes span 5 to 25 (VDLVIKMIGMIVIGALIGAVT) and 357 to 377 (ITWLGGLLGGLIGMIQAILLI).

It belongs to the UPF0754 family.

The protein resides in the cell membrane. This chain is UPF0754 membrane protein Exig_0680, found in Exiguobacterium sibiricum (strain DSM 17290 / CCUG 55495 / CIP 109462 / JCM 13490 / 255-15).